The chain runs to 349 residues: Ureidoglycolate dehydrogenase (NAD(+)) (349 aa).

H116 (proton acceptor) is an active-site residue. NAD(+) contacts are provided by residues S140, 174–176 (DMA), K224, and 306–308 (GQD).

This sequence belongs to the LDH2/MDH2 oxidoreductase family. As to quaternary structure, homodimer.

It is found in the cytoplasm. The enzyme catalyses (S)-ureidoglycolate + NAD(+) = N-carbamoyl-2-oxoglycine + NADH + H(+). Its pathway is nitrogen metabolism; (S)-allantoin degradation; oxalurate from (S)-ureidoglycolate: step 1/1. Its function is as follows. AllD plays a pivotal role as a metabolic branch-point enzyme in nitrogen utilization via the assimilation of allantoin. It is able to utilize allantoin as a sole source of nitrogen under anaerobic conditions. Catalyzes the oxidation of ureidoglycolate to oxalurate. This Escherichia coli (strain K12) protein is Ureidoglycolate dehydrogenase (NAD(+)).